Reading from the N-terminus, the 278-residue chain is Phosphatidylglycerol--prolipoprotein diacylglyceryl transferase (278 aa).

3 helical membrane passes run 13-33 (LFGIPVYWYAIIIVSGIALAV), 50-70 (VFDFMLWGLPAAIVGARLYYV), and 89-109 (NGGLAIYGGLIGGGLALFFFT). Residue arginine 135 participates in a 1,2-diacyl-sn-glycero-3-phospho-(1'-sn-glycerol) binding. Helical transmembrane passes span 175–195 (QPTFLYESVWNVLGFIVLVLL), 205–225 (GEVFLGYIIWYSFGRFFIEGL), and 236–256 (IRVSQLLSLVMFVAAIVIVIV).

This sequence belongs to the Lgt family.

Its subcellular location is the cell membrane. The catalysed reaction is L-cysteinyl-[prolipoprotein] + a 1,2-diacyl-sn-glycero-3-phospho-(1'-sn-glycerol) = an S-1,2-diacyl-sn-glyceryl-L-cysteinyl-[prolipoprotein] + sn-glycerol 1-phosphate + H(+). It participates in protein modification; lipoprotein biosynthesis (diacylglyceryl transfer). Its function is as follows. Catalyzes the transfer of the diacylglyceryl group from phosphatidylglycerol to the sulfhydryl group of the N-terminal cysteine of a prolipoprotein, the first step in the formation of mature lipoproteins. This Enterococcus faecalis (strain ATCC 700802 / V583) protein is Phosphatidylglycerol--prolipoprotein diacylglyceryl transferase.